A 148-amino-acid chain; its full sequence is Small ribosomal subunit protein bS6 (148 aa).

Residues 96-148 (HEEGQSAMLTRRDDRRERDGDDRPRRREGGFDRGDRGDRGPRRPRDTEAGEGA) form a disordered region.

Belongs to the bacterial ribosomal protein bS6 family.

Functionally, binds together with bS18 to 16S ribosomal RNA. This is Small ribosomal subunit protein bS6 from Brucella canis (strain ATCC 23365 / NCTC 10854 / RM-666).